The following is a 189-amino-acid chain: MAQERRPQREDRQSREERDSEFVDKLVAINRVAKVVKGGRRFGFAALVVVGDQKGRVGFGHGKAREVPEAIRKATEAAKRELIFVPLRDGRTLHHDVHGRHGAGKVLLRSAKVGTGIIAGGPMRAVFETLGMHDVVAKSTGSSNPYNMVRATFDALKHQVHPKDIAAQRGIKYATLQARRSASGNASEE.

In terms of domain architecture, S5 DRBM spans 22–85 (FVDKLVAINR…EAAKRELIFV (64 aa)).

This sequence belongs to the universal ribosomal protein uS5 family. Part of the 30S ribosomal subunit. Contacts proteins S4 and S8.

In terms of biological role, with S4 and S12 plays an important role in translational accuracy. Its function is as follows. Located at the back of the 30S subunit body where it stabilizes the conformation of the head with respect to the body. This chain is Small ribosomal subunit protein uS5, found in Rhizobium etli (strain CIAT 652).